The chain runs to 126 residues: Cytochrome c2 (126 aa).

Heme c contacts are provided by Cys17, Cys20, His21, and Met101.

The protein belongs to the cytochrome c family. In terms of processing, binds 1 heme c group covalently per subunit.

It is found in the periplasm. Functionally, cytochrome c2 is found mainly in purple, non-sulfur, photosynthetic bacteria where it functions as the electron donor to the oxidized bacteriochlorophyll in the photophosphorylation pathway. However, it may also have a role in the respiratory chain and is found in some non-photosynthetic bacteria. This Rhodovulum adriaticum (Rhodopseudomonas adriatica) protein is Cytochrome c2.